Reading from the N-terminus, the 118-residue chain is Aspartate 1-decarboxylase 1 (118 aa).

S25 functions as the Schiff-base intermediate with substrate; via pyruvic acid in the catalytic mechanism. S25 is modified (pyruvic acid (Ser)). Substrate is bound at residue T57. Y58 serves as the catalytic Proton donor. 73–75 (GAA) is a binding site for substrate.

The protein belongs to the PanD family. Heterooctamer of four alpha and four beta subunits. Pyruvate is required as a cofactor. In terms of processing, is synthesized initially as an inactive proenzyme, which is activated by self-cleavage at a specific serine bond to produce a beta-subunit with a hydroxyl group at its C-terminus and an alpha-subunit with a pyruvoyl group at its N-terminus.

The protein localises to the cytoplasm. The catalysed reaction is L-aspartate + H(+) = beta-alanine + CO2. It functions in the pathway cofactor biosynthesis; (R)-pantothenate biosynthesis; beta-alanine from L-aspartate: step 1/1. Its function is as follows. Catalyzes the pyruvoyl-dependent decarboxylation of aspartate to produce beta-alanine. The chain is Aspartate 1-decarboxylase 1 from Gloeobacter violaceus (strain ATCC 29082 / PCC 7421).